Here is a 959-residue protein sequence, read N- to C-terminus: Protein moonraker (959 aa).

A disordered region spans residues 124–156 (LPHSSHKGMHTKVERKDSKSQDVCHCSHQPSRV). Positions 134-145 (TKVERKDSKSQD) are enriched in basic and acidic residues. S279 is subject to Phosphoserine. A compositionally biased stretch (basic and acidic residues) spans 456–470 (EEAPRIEDNGTDFKD). Disordered regions lie at residues 456–560 (EEAP…ASPK) and 572–610 (RDAA…AESS). The segment covering 515–533 (PNQPYSKSRLQQTTVSSRL) has biased composition (polar residues). The segment covering 547-558 (WIPPNPTSPPAS) has biased composition (pro residues). Positions 582–674 (QEDIHKESQL…TQLADKVEEA (93 aa)) form a coiled coil. Positions 583–599 (EDIHKESQLRGDAEQEA) are enriched in basic and acidic residues. At S691 the chain carries Phosphoserine. Disordered regions lie at residues 692 to 721 (SVEA…SDVP) and 848 to 883 (LDES…PLSV). The span at 707–717 (AAAAAQPAEQA) shows a compositional bias: low complexity. Residues 857–874 (GSEKREAPLPLSREDLHQ) are compositionally biased toward basic and acidic residues. The interval 877–959 (GQTPLSVPPR…FTSEFLEAAA (83 aa)) is necessary and sufficient for CEP20-binding.

Interacts with CEP63 and WDR62. Forms a complex with OFD1 and CEP20/FOR20. Interacts with PCM1.

The protein resides in the cytoplasm. The protein localises to the cytoskeleton. Its subcellular location is the microtubule organizing center. It is found in the centrosome. It localises to the centriolar satellite. Functionally, involved in centriole duplication. Positively regulates CEP63 centrosomal localization. Required for WDR62 centrosomal localization and promotes the centrosomal localization of CDK2. May play a role in cilium assembly. The protein is Protein moonraker (Kiaa0753) of Mus musculus (Mouse).